The following is a 383-amino-acid chain: Lipid-A-disaccharide synthase (383 aa).

It belongs to the LpxB family.

The catalysed reaction is a lipid X + a UDP-2-N,3-O-bis[(3R)-3-hydroxyacyl]-alpha-D-glucosamine = a lipid A disaccharide + UDP + H(+). Its pathway is bacterial outer membrane biogenesis; LPS lipid A biosynthesis. Condensation of UDP-2,3-diacylglucosamine and 2,3-diacylglucosamine-1-phosphate to form lipid A disaccharide, a precursor of lipid A, a phosphorylated glycolipid that anchors the lipopolysaccharide to the outer membrane of the cell. The chain is Lipid-A-disaccharide synthase from Alcanivorax borkumensis (strain ATCC 700651 / DSM 11573 / NCIMB 13689 / SK2).